The chain runs to 132 residues: Replication enhancer protein (132 aa).

Belongs to the geminiviridae replication enhancer protein family. In terms of assembly, homooligomer. Interacts with the replication-associated protein (REP). Interacts with host proliferating cell nuclear antigen (PCNA). Interacts with host retinoblastoma-related protein 1 (RBR1), and may thereby deregulate the host cell cycle. Oligomerization and interaction with PCNA are necessary for optimal replication enhancement.

Increases viral DNA accumulation. Enhances infectivity and symptom expression. The protein is Replication enhancer protein of Tomato mottle virus (isolate Florida) (ToMoV).